Reading from the N-terminus, the 386-residue chain is MNISNIKIMLLGSGELGKEFIIAAQRLGIHTIAVDRYKNAPAMQVAHESYVIDMLNSDALEQLILAKNPTYIVPEIEAINTDSLVKLEAHNFNIIPCAKATKLTMDRQGIRALAVQQLNLQTSKFAFANSEQEYLDVIQSIGLPFVIKPVMSSSGKGQSIVKEHNEIKKAWDYAQNGSRGHAKGVIVEQFIDFDYEITLLTVRHKDGTSFCDPIGHIQKDGDYRFSWQPHTMPDTALAKSQEIAKEITDALGGYGVFGVELFIKGDEVFFNEVSPRPHDTGMVTLISQNINEFELHLRAIVGLPIPDIQTLQPSASAAILLEGDTANASICGIDKALADANVDIRIFSKKEIHGKRRMGVVLAKAQNTHIALETSKQALAHIHLTK.

N(1)-(5-phospho-beta-D-ribosyl)glycinamide is bound by residues 15–16 (EL) and E75. Residues R107, K148, 153-158 (SSGKGQ), 188-191 (EQFI), and E196 contribute to the ATP site. The ATP-grasp domain maps to 112-301 (ALAVQQLNLQ…EFELHLRAIV (190 aa)). Residues E260 and E272 each contribute to the Mg(2+) site. N(1)-(5-phospho-beta-D-ribosyl)glycinamide is bound by residues D279, K349, and 356-357 (RR).

Belongs to the PurK/PurT family. In terms of assembly, homodimer.

The enzyme catalyses N(1)-(5-phospho-beta-D-ribosyl)glycinamide + formate + ATP = N(2)-formyl-N(1)-(5-phospho-beta-D-ribosyl)glycinamide + ADP + phosphate + H(+). Its pathway is purine metabolism; IMP biosynthesis via de novo pathway; N(2)-formyl-N(1)-(5-phospho-D-ribosyl)glycinamide from N(1)-(5-phospho-D-ribosyl)glycinamide (formate route): step 1/1. Its function is as follows. Involved in the de novo purine biosynthesis. Catalyzes the transfer of formate to 5-phospho-ribosyl-glycinamide (GAR), producing 5-phospho-ribosyl-N-formylglycinamide (FGAR). Formate is provided by PurU via hydrolysis of 10-formyl-tetrahydrofolate. This chain is Formate-dependent phosphoribosylglycinamide formyltransferase, found in Francisella tularensis subsp. holarctica (strain LVS).